Consider the following 152-residue polypeptide: Deoxyuridine 5'-triphosphate nucleotidohydrolase (152 aa).

Substrate-binding positions include 71 to 73 (RSG), N84, 88 to 90 (LID), and K98.

This sequence belongs to the dUTPase family. Mg(2+) is required as a cofactor.

The enzyme catalyses dUTP + H2O = dUMP + diphosphate + H(+). It functions in the pathway pyrimidine metabolism; dUMP biosynthesis; dUMP from dCTP (dUTP route): step 2/2. Functionally, this enzyme is involved in nucleotide metabolism: it produces dUMP, the immediate precursor of thymidine nucleotides and it decreases the intracellular concentration of dUTP so that uracil cannot be incorporated into DNA. The protein is Deoxyuridine 5'-triphosphate nucleotidohydrolase of Legionella pneumophila subsp. pneumophila (strain Philadelphia 1 / ATCC 33152 / DSM 7513).